A 707-amino-acid polypeptide reads, in one-letter code: Ribosome biogenesis protein ENP2 (707 aa).

WD repeat units lie at residues 54-94 (EFSE…LKFD), 178-217 (LDTE…RVSK), 226-265 (NRPF…PSII), 269-310 (GYGF…AYAS), and 312-351 (EPSV…PSPR). Residues 523-707 (LTAAEESDEE…RASKNAFRGM (185 aa)) form a disordered region. Ser-529 is subject to Phosphoserine. A compositionally biased stretch (basic and acidic residues) spans 532–544 (ERIAMKDGRGHYD). Residues 545–558 (YEDEESDEEESDDE) show a composition bias toward acidic residues. Phosphoserine occurs at positions 550 and 555. Basic and acidic residues-rich tracts occupy residues 559 to 598 (TNQK…RFMN), 629 to 647 (ENGK…RGEA), 659 to 671 (KDGN…HDNS), and 680 to 697 (NGNK…ENRR).

It belongs to the WD repeat NOL10/ENP2 family. Component of the 90S pre-ribosomes.

The protein resides in the nucleus. The protein localises to the nucleolus. In terms of biological role, may be involved in rRNA-processing and ribosome biosynthesis. The protein is Ribosome biogenesis protein ENP2 (ENP2) of Saccharomyces cerevisiae (strain ATCC 204508 / S288c) (Baker's yeast).